The following is an 873-amino-acid chain: DNA mismatch repair protein MutS (873 aa).

620-627 (GPNMAGKS) contacts ATP.

Belongs to the DNA mismatch repair MutS family.

Its function is as follows. This protein is involved in the repair of mismatches in DNA. It is possible that it carries out the mismatch recognition step. This protein has a weak ATPase activity. The polypeptide is DNA mismatch repair protein MutS (Ruminiclostridium cellulolyticum (strain ATCC 35319 / DSM 5812 / JCM 6584 / H10) (Clostridium cellulolyticum)).